A 178-amino-acid polypeptide reads, in one-letter code: Fatty-acid and retinol-binding protein 1 (178 aa).

Positions 1–16 (MYHRLILLALVGTTMA) are cleaved as a signal peptide. Coiled coils occupy residues 67 to 89 (DAAL…ELRN) and 130 to 153 (KQAA…ELKV).

Belongs to the fatty-acid and retinol-binding protein (FARBP) family. Post-translationally, not glycosylated.

The protein resides in the secreted. In terms of biological role, binds retinol and different fatty acids. This Brugia pahangi (Filarial nematode worm) protein is Fatty-acid and retinol-binding protein 1.